Consider the following 344-residue polypeptide: Trace amine-associated receptor 8c (344 aa).

Residues 1-36 (MTSNFSQATLQLCYENVNASCIKTPYSPGLRVLLYM) lie on the Extracellular side of the membrane. Residues asparagine 4 and asparagine 18 are each glycosylated (N-linked (GlcNAc...) asparagine). 2 cysteine pairs are disulfide-bonded: cysteine 21/cysteine 185 and cysteine 96/cysteine 189. Residues 37-57 (VFGFGAVLAVCGNLLVVISVL) form a helical membrane-spanning segment. The Cytoplasmic portion of the chain corresponds to 58–67 (HFKQLHSPAN). Residues 68 to 88 (FLIASLASADFLVGISVMPFS) form a helical membrane-spanning segment. Residues 89-102 (MVRSIESCWYFGDT) lie on the Extracellular side of the membrane. A helical transmembrane segment spans residues 103–127 (FCSLHSCCDVAFCYSSALHLCFISV). Topologically, residues 128 to 146 (DRYIAVTDPLVYPTKFTVS) are cytoplasmic. The chain crosses the membrane as a helical span at residues 147–167 (VSGICISISWILPLVYSSAVF). Residues 168–196 (YTGISAMGIENLVSALNCVGGCQVVVNQD) are Extracellular-facing. Residues 197-217 (WVLISFLLFFIPTLVMIILYS) traverse the membrane as a helical segment. At 218 to 260 (KIFLVAKQQAVKIETSVSGSKGESSLESHKARVAKRERKAAKT) the chain is on the cytoplasmic side. The helical transmembrane segment at 261 to 281 (LGVTVLAFIVSWLPYTIDTLI) threads the bilayer. The Extracellular segment spans residues 282–295 (DAFMGFITPAYVYE). The chain crosses the membrane as a helical span at residues 296–319 (FCCWSAYYNSAMNPLIYAFFYPWF). Over 320–344 (RKAMKLILSGKILKGHSSTTSLFSE) the chain is Cytoplasmic.

The protein belongs to the G-protein coupled receptor 1 family.

It localises to the cell membrane. Functionally, olfactory receptor activated by trace amines, such as N-methylpiperidine and N,N-dimethylcyclohexylamine. Trace amine compounds are enriched in animal body fluids and act on trace amine-associated receptors (TAARs) to elicit both intraspecific and interspecific innate behaviors. Ligand-binding causes a conformation change that triggers signaling via G(s)-class of G alpha proteins (GNAL or GNAS). This chain is Trace amine-associated receptor 8c, found in Rattus norvegicus (Rat).